The sequence spans 517 residues: Gamma-1-syntrophin (517 aa).

Residues Thr-57–Lys-140 form the PDZ domain. A PH domain is found at Gln-283 to Phe-390.

It belongs to the syntrophin family. In terms of assembly, isoform 1, but not isoform 2, interacts with the dystrophin protein DMD and related proteins DTNA and DTNB. Interacts with DGKZ. Brain specific. In CNS, it is expressed in the perikaryon and proximal portion of the neuronal processes. Strong expression in the hippocampus, neuron-rich dendate granule cells, and pyramidal cell layers. Highly expressed in neurons of the cerebral cortex. Also expressed in the cerebellar cortex, deep cerebellar nuclei, thalamus, and basal ganglia. No expression in muscle cells.

It is found in the cytoplasm. The protein localises to the cytoskeleton. The protein resides in the nucleus. Functionally, adapter protein that binds to and probably organizes the subcellular localization of a variety of proteins. May link various receptors to the actin cytoskeleton and the dystrophin glycoprotein complex. May participate in regulating the subcellular location of diacylglycerol kinase-zeta to ensure that diacylglycerol is rapidly inactivated following receptor activation. The chain is Gamma-1-syntrophin (SNTG1) from Homo sapiens (Human).